The primary structure comprises 73 residues: Beta-defensin 108B (73 aa).

An N-terminal signal peptide occupies residues M1 to G22. Cystine bridges form between C28–C55, C35–C49, and C39–C56.

The protein belongs to the beta-defensin family. In terms of tissue distribution, specifically expressed in testis. Low expression is detected also in liver.

Its subcellular location is the secreted. In terms of biological role, has antibacterial activity. This is Beta-defensin 108B (DEFB108B) from Homo sapiens (Human).